The following is a 179-amino-acid chain: Small ribosomal subunit protein eS10x (179 aa).

The tract at residues 90 to 179 is disordered; that stretch reads TLKKSAKPGG…AAAPSGSGLP (90 aa). Basic and acidic residues predominate over residues 108-129; that stretch reads DRSRGPRHEGGDRPRFGDRDGY. Over residues 134-144 the composition is skewed to gly residues; the sequence is RAGGEFGGEKG. Residues 145-156 are compositionally biased toward low complexity; it reads GAPADYQPSFQG. Over residues 157–167 the composition is skewed to gly residues; it reads SGRGFGRGAGG. The segment covering 168–179 has biased composition (low complexity); sequence YSAAAPSGSGLP.

This sequence belongs to the eukaryotic ribosomal protein eS10 family.

It localises to the cytoplasm. This is Small ribosomal subunit protein eS10x (RPS10C) from Arabidopsis thaliana (Mouse-ear cress).